The sequence spans 78 residues: Large ribosomal subunit protein bL28 (78 aa).

The interval 1 to 25 is disordered; it reads MARVCQVTGKRPMSGHHVSHANNKT. Basic residues predominate over residues 13 to 25; that stretch reads MSGHHVSHANNKT.

The protein belongs to the bacterial ribosomal protein bL28 family.

The polypeptide is Large ribosomal subunit protein bL28 (Nitrosomonas eutropha (strain DSM 101675 / C91 / Nm57)).